The sequence spans 415 residues: MDAEIISVGTEIVLGQIINTNAAYLANRLTQLDLPATYQTTVDDQSQRLERVINHALTRAQLVFVCGGLGPTADDITMPTVAKTLGKELQTDEEHWKWIQKTFEQRQIKMEPENIRQAQYPRGGEPLANPVGLALGCWYETKGKVVVVLPGPPAEFKAMVEKSLVPKLQQYFQTRKQITSRTLNFLGRPESQLMDEIEGATNDIPGISITSYVQPTAIQVRLTVRDLPVIEAEEKIDQAQKAILAVEEPFFFGVGDDLTLAKVVVEQLKKRGWKLTAAESLTGGMFQSAICSVPGASTVFNGGFVTYAASAKEKLLGIPHATIDRYGVVSSETAATMAEGCQRKLNVEVGIGFTGVAGPDMLEGQPAGTVWIGLAMKGRSTKTVQLHLASYVGRQAIRTLSVQYGLQLIYHELKK.

This sequence belongs to the CinA family.

The sequence is that of Putative competence-damage inducible protein from Limosilactobacillus reuteri (strain DSM 20016) (Lactobacillus reuteri).